Consider the following 780-residue polypeptide: Cullin-5 (780 aa).

Serine 34 is modified (phosphoserine). Threonine 210 carries the phosphothreonine modification. The Cullin neddylation domain occupies 713-772 (LRTRKLYIQIMKMRKKISNAQLQTELVEILKNMFLPQKKMIKEQIEWLIEHKYIRRDESD). Lysine 724 is covalently cross-linked (Glycyl lysine isopeptide (Lys-Gly) (interchain with G-Cter in NEDD8)).

The protein belongs to the cullin family. In terms of assembly, component of multiple cullin-5-RING E3 ubiquitin-protein ligase complexes (ECS complexes, also named CRL5 complexes) formed of CUL5, Elongin BC (ELOB and ELOC), RNF7/RBX2 and a variable SOCS box domain-containing protein as substrate-specific recognition component. CUL5-containing ECS complexes specifically contain RNF7/RBX2, and not RBX1, as catalytic subunit. Component of the ECS(ASB2) complex with the substrate recognition component ASB2. Component of the ECS(ASB6) complex with the substrate recognition component ASB6. Component of the ECS(ASB7) complex with the substrate recognition component ASB7. Component of the ECS(ASB9) complex with the substrate recognition component ASB9. Component of the ECS(ASB11) complex with the substrate recognition component ASB11. Component of the ECS(ASB12) complex with the substrate recognition component ASB12. Component of the ECS(LRRC41) complex with the substrate recognition component LRRC41. Component of the ECS(SOCS1) complex with the substrate recognition component SOCS1. Component of the ECS(SOCS2) complex with the substrate recognition component SOCS2. Component of the ECS(WSB1) complex with the substrate recognition subunit WSB1. Component of the ECS(SOCS3) complex with the substrate recognition component SOCS3. Component of the ECS(SOCS7) complex with the substrate recognition component SOCS7. Component of the ECS(SPSB1) complex with the substrate recognition component SPSB1. Component of the ECS(SPSB3) complex with the substrate recognition component SPSB3. Component of the ECS(SPSB2) complex with the substrate recognition component SPSB2. Component of the ECS(SPSB4) complex with the substrate recognition component SPSB4. Component of the ECS(RAB40) complex with the substrate recognition subunit RAB40A, RAB40B or RAB40C. Component of the ECS(KLHDC1) complex with the substrate recognition component KLHDC1. Component of the ECS(PCMTD1) complex with the substrate recognition subunit PCMTD1. May also form complexes containing RBX1 and ELOA or VHL; additional evidence is however required to confirm this result in vivo. Interacts (when neddylated) with ARIH2; leading to activate the E3 ligase activity of ARIH2. Interacts with ERCC6; the interaction is induced by DNA damaging agents or inhibitors of RNA polymerase II elongation. Interacts with ELOA (via the BC-box). Interacts (unneddylated form) with DCUN1D1, DCUN1D2, DCUN1D3, DCUN1D4 and DCUN1D5; these interactions promote the cullin neddylation. Neddylated; which enhances the ubiquitination activity of ECS complexes and prevents binding of the inhibitor CAND1. Deneddylated via its interaction with the COP9 signalosome (CSN). In terms of tissue distribution, kidney collecting tubules.

The protein resides in the nucleus. It participates in protein modification; protein ubiquitination. Its function is as follows. Core component of multiple cullin-5-RING E3 ubiquitin-protein ligase complexes (ECS complexes, also named CRL5 complexes), which mediate the ubiquitination and subsequent proteasomal degradation of target proteins. Acts a scaffold protein that contributes to catalysis through positioning of the substrate and the ubiquitin-conjugating enzyme. The functional specificity of the E3 ubiquitin-protein ligase complex depends on the variable SOCS box-containing substrate recognition component. Acts as a key regulator of neuron positioning during cortex development: component of various SOCS-containing ECS complexes, such as the ECS(SOCS7) complex, that regulate reelin signaling by mediating ubiquitination and degradation of DAB1. ECS(SOCS1) seems to direct ubiquitination of JAK2. The ECS(SOCS2) complex mediates the ubiquitination and subsequent proteasomal degradation of phosphorylated EPOR and GHR. The ECS(SPSB3) complex catalyzes ubiquitination of nuclear CGAS. ECS(KLHDC1) complex is part of the DesCEND (destruction via C-end degrons) pathway and mediates ubiquitination and degradation of truncated SELENOS selenoprotein produced by failed UGA/Sec decoding, which ends with a glycine. The ECS(ASB9) complex mediates ubiquitination and degradation of CKB. As part of some ECS complex, promotes 'Lys-11'-linked ubiquitination and degradation of BTRC. As part of a multisubunit ECS complex, polyubiquitinates monoubiquitinated POLR2A. As part of the ECS(RAB40C) complex, mediates ANKRD28 ubiquitination and degradation, thereby regulating protein phosphatase 6 (PP6) complex activity and focal adhesion assembly during cell migration. As part of the ECS(RAB40A) complex, mediates RHOU 'Lys-48'-linked ubiquitination and degradation, thus inhibiting focal adhesion disassembly during cell migration. As part of the ECS(RAB40B) complex, mediates LIMA1/EPLIN and RAP2 ubiquitination, thereby regulating actin cytoskeleton dynamics and stress fiber formation during cell migration. May form a cell surface vasopressin receptor. The protein is Cullin-5 (CUL5) of Oryctolagus cuniculus (Rabbit).